Reading from the N-terminus, the 186-residue chain is MSVADIRKSAETRMAKSLETLKASLAKIRTGRAHTGILDHVQVEYYGSPVPISQVANVNLVDARTISVQPYEKSMAGPIEKAIRESDLGLNPVSMGETIRVPMPALTEERRRDLTKVVKSEGEDAKVAVRNLRREANEALKKLVKDKEISEDDERRAQDDVQKLTDRAVGDIDKMIVQKEAEIMTV.

This sequence belongs to the RRF family.

The protein resides in the cytoplasm. Its function is as follows. Responsible for the release of ribosomes from messenger RNA at the termination of protein biosynthesis. May increase the efficiency of translation by recycling ribosomes from one round of translation to another. The chain is Ribosome-recycling factor from Bordetella parapertussis (strain 12822 / ATCC BAA-587 / NCTC 13253).